Reading from the N-terminus, the 330-residue chain is NADH-quinone oxidoreductase subunit H (330 aa).

9 consecutive transmembrane segments (helical) span residues 5-25, 44-64, 78-98, 122-142, 156-176, 192-212, 240-260, 271-293, and 310-330; these read LFFIIETFIKAVVILAVIACL, IGPDMVGPVGVLQIVADMIKL, FIFLIAPLISAIAAFAALAPI, VLYVMGVASVCVFSPLMAGLA, VMGLISFEVVSGLALLSVIMI, IFGWFVFKQPLAFVLFLMASF, MRWAMFFIGEYANMIASSIVI, FWFVPGGLMMIFKASCVFFFFLW, and CWKILLPLALVNVLITGIALI.

The protein belongs to the complex I subunit 1 family. As to quaternary structure, NDH-1 is composed of 14 different subunits. Subunits NuoA, H, J, K, L, M, N constitute the membrane sector of the complex.

It localises to the cell inner membrane. It catalyses the reaction a quinone + NADH + 5 H(+)(in) = a quinol + NAD(+) + 4 H(+)(out). In terms of biological role, NDH-1 shuttles electrons from NADH, via FMN and iron-sulfur (Fe-S) centers, to quinones in the respiratory chain. The immediate electron acceptor for the enzyme in this species is believed to be ubiquinone. Couples the redox reaction to proton translocation (for every two electrons transferred, four hydrogen ions are translocated across the cytoplasmic membrane), and thus conserves the redox energy in a proton gradient. This subunit may bind ubiquinone. The protein is NADH-quinone oxidoreductase subunit H of Campylobacter curvus (strain 525.92).